Reading from the N-terminus, the 103-residue chain is Hexon-interlacing protein (103 aa).

The interval Arg25–Ser45 is disordered. A coiled-coil region spans residues Leu72–Arg99.

Belongs to the adenoviridae hexon-interlacing protein family. In terms of assembly, homotrimer. Interacts with hexon protein; this interaction tethers the hexons together. Self-interacts with adjacent proteins. Interacts with kinesin light chain KLC1; this interaction leads to capsid disruption at the nuclear pore complex during virus entry into host cell.

It localises to the virion. It is found in the host nucleus. Its function is as follows. Structural component of the virion that acts as a cement protein on the capsid exterior and forms triskelion structures consisting of three molecules that stabilize three hexon trimers at the center of each icosahedral facet and fixes the peripentonal hexons. Dispensable for assembly. During virus entry, recruits the anterograde motor kinesin-1 to the capsid docked at the nuclear pore complex thereby subjecting the docked capsid to a pulling force. The resulting tension leads to capsid disruption, dispersion of capsid fragments toward cell periphery and eventually viral DNA entry into the host nucleus. The chain is Hexon-interlacing protein from Canine adenovirus serotype 1 (strain CLL) (CAdV-1).